Consider the following 109-residue polypeptide: Urease subunit gamma (109 aa).

This sequence belongs to the urease gamma subunit family. In terms of assembly, heterotrimer of UreA (gamma), UreB (beta) and UreC (alpha) subunits. Three heterotrimers associate to form the active enzyme.

The protein resides in the cytoplasm. It catalyses the reaction urea + 2 H2O + H(+) = hydrogencarbonate + 2 NH4(+). Its pathway is nitrogen metabolism; urea degradation; CO(2) and NH(3) from urea (urease route): step 1/1. The protein is Urease subunit gamma of Natronomonas pharaonis (strain ATCC 35678 / DSM 2160 / CIP 103997 / JCM 8858 / NBRC 14720 / NCIMB 2260 / Gabara) (Halobacterium pharaonis).